The primary structure comprises 292 residues: Elongation factor Ts (292 aa).

The segment at 79-82 (TDFV) is involved in Mg(2+) ion dislocation from EF-Tu.

The protein belongs to the EF-Ts family.

Its subcellular location is the cytoplasm. Functionally, associates with the EF-Tu.GDP complex and induces the exchange of GDP to GTP. It remains bound to the aminoacyl-tRNA.EF-Tu.GTP complex up to the GTP hydrolysis stage on the ribosome. The protein is Elongation factor Ts (tsf) of Idiomarina loihiensis (strain ATCC BAA-735 / DSM 15497 / L2-TR).